Here is a 700-residue protein sequence, read N- to C-terminus: ATP-dependent zinc metalloprotease FtsH (700 aa).

Residues 1 to 20 (MSSDNGSGRQGGDRGGSTGY) lie on the Cytoplasmic side of the membrane. The helical transmembrane segment at 21-41 (NLLMYLGFGAIIATLVALYVL) threads the bilayer. Topologically, residues 42–171 (QMFQTSLDYT…FRHADPPGPW (130 aa)) are periplasmic. Residues 172–192 (EQHSQLIIGMLLAAMLIYIVV) traverse the membrane as a helical segment. Residues 193 to 700 (RRLSAAGSPM…ITAPATERSG (508 aa)) are Cytoplasmic-facing. 262–269 (GPPGTGKT) serves as a coordination point for ATP. Histidine 484 is a Zn(2+) binding site. Glutamate 485 is a catalytic residue. Zn(2+) contacts are provided by histidine 488 and aspartate 561.

It in the central section; belongs to the AAA ATPase family. The protein in the C-terminal section; belongs to the peptidase M41 family. In terms of assembly, homohexamer. Requires Zn(2+) as cofactor.

The protein resides in the cell inner membrane. Acts as a processive, ATP-dependent zinc metallopeptidase for both cytoplasmic and membrane proteins. Plays a role in the quality control of integral membrane proteins. The polypeptide is ATP-dependent zinc metalloprotease FtsH (Pirellula staleyi (strain ATCC 27377 / DSM 6068 / ICPB 4128) (Pirella staleyi)).